The chain runs to 140 residues: VapC ribonuclease Y4jK (140 aa).

A PINc domain is found at 2 to 135 (IVLDTNVISE…FEAAGLDIIN (134 aa)). Asp-5 and Asp-104 together coordinate Mg(2+).

This sequence belongs to the PINc/VapC protein family. Mg(2+) serves as cofactor.

Functionally, toxic component of a type II toxin-antitoxin (TA) system. An RNase. Involved in plasmid stability. The protein is VapC ribonuclease Y4jK of Sinorhizobium fredii (strain NBRC 101917 / NGR234).